Consider the following 489-residue polypeptide: Protein LMBR1L (489 aa).

At 1–21 (MEAPDYEVLSVREQLFHERIR) the chain is on the extracellular side. The interaction with LGB stretch occupies residues 1 to 59 (MEAPDYEVLSVREQLFHERIRECIISTLLFATLYILCHIFLTRFKKPAEFTTVDDEDAT). The tract at residues 1–76 (MEAPDYEVLS…LCTFTLAIAL (76 aa)) is LCN1-binding. Residues 22-42 (ECIISTLLFATLYILCHIFLT) traverse the membrane as a helical segment. Residues 43 to 66 (RFKKPAEFTTVDDEDATVNKIALE) are Cytoplasmic-facing. The helical transmembrane segment at 67–87 (LCTFTLAIALGAVLLLPFSII) threads the bilayer. Topologically, residues 88 to 114 (SNEVLLSLPRNYYIQWLNGSLIHGLWN) are extracellular. A helical transmembrane segment spans residues 115–135 (LVFLFSNLSLIFLMPFAYFFT). Residues 136–154 (ESEGFAGSRKGVLGRVYET) lie on the Cytoplasmic side of the membrane. A helical transmembrane segment spans residues 155–175 (VVMLMLLTLLVLGMVWVASAI). Residues 176 to 196 (VDKNKANRESLYDFWEYYLPY) lie on the Extracellular side of the membrane. Residues 197 to 217 (LYSCISFLGVLLLLVCTPLGL) form a helical membrane-spanning segment. At 218–305 (ARMFSVTGKL…NLGYPLAMLC (88 aa)) the chain is on the cytoplasmic side. The helical transmembrane segment at 306-326 (LLVLTGLSVLIVAIHILELLI) threads the bilayer. Topologically, residues 327-350 (DEAAMPRGMQGTSLGQVSFSKLGS) are extracellular. A helical transmembrane segment spans residues 351–371 (FGAVIQVVLIFYLMVSSVVGF). Over 372–388 (YSSPLFRSLRPRWHDTA) the chain is Cytoplasmic. A helical transmembrane segment spans residues 389–409 (MTQIIGNCVCLLVLSSALPVF). Over 410–431 (SRTLGLTRFDLLGDFGRFNWLG) the chain is Extracellular. A helical membrane pass occupies residues 432–452 (NFYIVFLYNAAFAGLTTLCLV). At 453–489 (KTFTAAVRAELIRAFGLDRLPLPVSGFPQASRKTQHQ) the chain is on the cytoplasmic side.

Belongs to the LIMR family. As to quaternary structure, dimer. Can also form higher oligomers. Interacts with LCN1; this interaction mediates the endocytosis of LCN1. Interacts with UBAC2, FAF2, VCP, AMFR, ZNRF3, CTNNB1, LRP6, GSK3A and GSK3B. Interacts with DVL2 and RNF43. Interaction with SCGB1A1 has been observed in PubMed:16423471, but not in PubMed:23964685. Interaction with LGB which mediates the endocytosis of LGB has been observed in PubMed:17991420, but not in PubMed:23964685. Expressed in testis, pituitary gland, adrenal gland, trachea, placenta, thymus, cerebellum, stomach, mammary gland, spinal cord. A weaker expression is detected in colon, pancreas, and prostate.

The protein resides in the cell membrane. It localises to the endoplasmic reticulum membrane. Its function is as follows. Plays an essential role in lymphocyte development by negatively regulating the canonical Wnt signaling pathway. In association with UBAC2 and E3 ubiquitin-protein ligase AMFR, promotes the ubiquitin-mediated degradation of CTNNB1 and Wnt receptors FZD6 and LRP6. LMBR1L stabilizes the beta-catenin destruction complex that is required for regulating CTNNB1 levels. Acts as a LCN1 receptor and can mediate its endocytosis. The sequence is that of Protein LMBR1L (LMBR1L) from Homo sapiens (Human).